The chain runs to 182 residues: Lipoprotein signal peptidase (182 aa).

3 helical membrane-spanning segments follow: residues 21–41 (LLLS…VLAV), 74–94 (GYTW…FWMG), and 98–118 (VSPW…GNLV). Catalysis depends on residues aspartate 134 and aspartate 148. A helical membrane pass occupies residues 146-166 (VADPSVVGGAILLVVLSIFGY).

The protein belongs to the peptidase A8 family.

The protein localises to the cell membrane. The enzyme catalyses Release of signal peptides from bacterial membrane prolipoproteins. Hydrolyzes -Xaa-Yaa-Zaa-|-(S,diacylglyceryl)Cys-, in which Xaa is hydrophobic (preferably Leu), and Yaa (Ala or Ser) and Zaa (Gly or Ala) have small, neutral side chains.. It functions in the pathway protein modification; lipoprotein biosynthesis (signal peptide cleavage). In terms of biological role, this protein specifically catalyzes the removal of signal peptides from prolipoproteins. The protein is Lipoprotein signal peptidase of Mycobacterium avium (strain 104).